A 326-amino-acid polypeptide reads, in one-letter code: Transcription cofactor vestigial-like protein 3 (326 aa).

The interval 54-82 (SLEVTLPSKQEEEEEEEEDEEEEEKDQPA) is disordered. A Glycyl lysine isopeptide (Lys-Gly) (interchain with G-Cter in SUMO2) cross-link involves residue Lys62. A compositionally biased stretch (acidic residues) spans 64-78 (EEEEEEEEDEEEEEK). Residue Lys129 forms a Glycyl lysine isopeptide (Lys-Gly) (interchain with G-Cter in SUMO2) linkage. Positions 184–208 (TADPNSWPGHGLHQTGPAPPPTASE) are disordered.

It belongs to the vestigial family.

The protein localises to the nucleus. Its function is as follows. May act as a specific coactivator for the mammalian TEFs. This Mus musculus (Mouse) protein is Transcription cofactor vestigial-like protein 3.